Here is a 389-residue protein sequence, read N- to C-terminus: MSVRIVDVREITKPISSPIRNAYIDFTKMTTSLVAVVTDVVREGKRVVGYGFNSNGRYGQGGLIRERFASRILEADPKKLLNEAGDNLDPDKVWAAMMINEKPGGHGERSVAVGTIDMAVWDAVAKIAGKPLFRLLAERHGVKANPRVFVYAAGGYYYPGKGLSMLRGEMRGYLDRGYNVVKMKIGGAPIEEDRMRIEAVLEEIGKDAQLAVDANGRFNLETGIAYAKMLRDYPLFWYEEVGDPLDYALQAALAEFYPGPMATGENLFSHQDARNLLRYGGMRPDRDWLQFDCALSYGLCEYQRTLEVLKTHGWSPSRCIPHGGHQMSLNIAAGLGLGGNESYPDLFQPYGGFPDGVRVENGHITMPDLPGIGFEGKSDLYKEMKALAE.

Substrate contacts are provided by residues Asn21, Asn55, Lys102, Tyr156, Lys182, 182–184, 213–215, Glu239, Glu265, His322, and 341–343; these read KMK, DAN, and ESY. The active-site acceptor is the Lys184. Mg(2+) contacts are provided by Asp213, Glu239, and Glu265. The active-site Proton donor/acceptor is His322.

This sequence belongs to the mandelate racemase/muconate lactonizing enzyme family. In terms of assembly, homooctamer; tetramer of dimers. It depends on Mg(2+) as a cofactor.

It catalyses the reaction (S,S)-tartrate = oxaloacetate + H2O. Functionally, catalyzes the dehydration of D-tartrate to oxaloacetate. The sequence is that of D(-)-tartrate dehydratase (tarD) from Bradyrhizobium diazoefficiens (strain JCM 10833 / BCRC 13528 / IAM 13628 / NBRC 14792 / USDA 110).